Here is a 464-residue protein sequence, read N- to C-terminus: Chitobiosyldiphosphodolichol beta-mannosyltransferase (464 aa).

The Lumenal portion of the chain corresponds to 1 to 2; that stretch reads MA. The chain crosses the membrane as a helical span at residues 3–23; the sequence is ASCLVLLALCLLLPLLLLGGW. The Cytoplasmic segment spans residues 24–99; it reads KRWRRGRTAR…ELQSLAVGPR (76 aa). Positions 100 to 120 form an intramembrane region, helical; it reads VFQYGVKVVFQAMYLLWKLMW. Residues 121–464 lie on the Cytoplasmic side of the membrane; that stretch reads REPGAYIFLQ…QTVLPLVMDT (344 aa). Serine 242 bears the Phosphoserine mark. The disordered stretch occupies residues 242-261; the sequence is SPFRARSEPEDPATERSAFT.

It belongs to the glycosyltransferase group 1 family. Glycosyltransferase 33 subfamily.

It is found in the endoplasmic reticulum membrane. The enzyme catalyses an N,N'-diacetylchitobiosyl-diphospho-di-trans,poly-cis-dolichol + GDP-alpha-D-mannose = a beta-D-Man-(1-&gt;4)-beta-D-GlcNAc-(1-&gt;4)-alpha-D-GlcNAc-diphospho-di-trans,poly-cis-dolichol + GDP + H(+). It participates in protein modification; protein glycosylation. Its function is as follows. Mannosyltransferase that operates in the biosynthetic pathway of dolichol-linked oligosaccharides, the glycan precursors employed in protein asparagine (N)-glycosylation. The assembly of dolichol-linked oligosaccharides begins on the cytosolic side of the endoplasmic reticulum membrane and finishes in its lumen. The sequential addition of sugars to dolichol pyrophosphate produces dolichol-linked oligosaccharides containing fourteen sugars, including two GlcNAcs, nine mannoses and three glucoses. Once assembled, the oligosaccharide is transferred from the lipid to nascent proteins by oligosaccharyltransferases. Catalyzes, on the cytoplasmic face of the endoplasmic reticulum, the addition of the first mannose residues to the dolichol-linked oligosaccharide chain, to produce Man1GlcNAc(2)-PP-dolichol core oligosaccharide. Man1GlcNAc(2)-PP-dolichol is a substrate for ALG2, the following enzyme in the biosynthetic pathway. This Pongo abelii (Sumatran orangutan) protein is Chitobiosyldiphosphodolichol beta-mannosyltransferase.